A 579-amino-acid polypeptide reads, in one-letter code: Alpha-longipinene synthase (579 aa).

The Mg(2+) site is built by aspartate 332, aspartate 336, aspartate 476, and asparagine 484. The DDXXD motif motif lies at 332–336 (DDLYD).

It belongs to the terpene synthase family. Tpsd subfamily. Mg(2+) serves as cofactor. Requires Mn(2+) as cofactor.

The enzyme catalyses (2E,6E)-farnesyl diphosphate = alpha-longipinene + diphosphate. It functions in the pathway sesquiterpene biosynthesis. It participates in terpene metabolism; oleoresin biosynthesis. Its function is as follows. Terpene synthase (TPS) involved in the biosynthesis of sesquiterpene natural products included in conifer oleoresin secretions and volatile emissions; these compounds contribute to biotic and abiotic stress defense against herbivores and pathogens. Catalyzes the conversion of (2E,6E)-farnesyl diphosphate (FPP) to alpha-longipinene. The polypeptide is Alpha-longipinene synthase (Picea sitchensis (Sitka spruce)).